Reading from the N-terminus, the 146-residue chain is MQAKHQRLILGIIALAAVIAAGFLALVAFKKQAAYFFTPTDAVKAHLPANRNIRLGGMVERGSLIREKDGVTIHFRVTDGYQKIAVSYRGIVPDLFREGSGVVADGHFDPSGSFTAETILAKHDERYMPPVTQQQAAATQTTLQEK.

The Cytoplasmic portion of the chain corresponds to 1–7 (MQAKHQR). A helical; Signal-anchor for type II membrane protein transmembrane segment spans residues 8-28 (LILGIIALAAVIAAGFLALVA). Topologically, residues 29–146 (FKKQAAYFFT…AATQTTLQEK (118 aa)) are periplasmic. H123 and Y127 together coordinate heme.

This sequence belongs to the CcmE/CycJ family.

It localises to the cell inner membrane. Heme chaperone required for the biogenesis of c-type cytochromes. Transiently binds heme delivered by CcmC and transfers the heme to apo-cytochromes in a process facilitated by CcmF and CcmH. This is Cytochrome c-type biogenesis protein CcmE from Zymomonas mobilis subsp. mobilis (strain ATCC 31821 / ZM4 / CP4).